A 357-amino-acid polypeptide reads, in one-letter code: uncharacterized protein (357 aa).

The first 19 residues, methionine 1–alanine 19, serve as a signal peptide directing secretion.

This is an uncharacterized protein from Rickettsia prowazekii (strain Madrid E).